The chain runs to 141 residues: ATP synthase epsilon chain (141 aa).

This sequence belongs to the ATPase epsilon chain family. F-type ATPases have 2 components, CF(1) - the catalytic core - and CF(0) - the membrane proton channel. CF(1) has five subunits: alpha(3), beta(3), gamma(1), delta(1), epsilon(1). CF(0) has three main subunits: a, b and c.

Its subcellular location is the cell inner membrane. In terms of biological role, produces ATP from ADP in the presence of a proton gradient across the membrane. The polypeptide is ATP synthase epsilon chain (Cellvibrio japonicus (strain Ueda107) (Pseudomonas fluorescens subsp. cellulosa)).